The primary structure comprises 494 residues: Rho GTPase-activating protein 19 (494 aa).

Position 2 is an N-acetylalanine (A2). Phosphoserine is present on residues S7 and S31. The region spanning 102 to 308 (MSLKRKEKGV…FMIKHSQKLF (207 aa)) is the Rho-GAP domain. Disordered regions lie at residues 349 to 368 (KSQK…TQHH) and 399 to 421 (QSLT…ARSR). Over residues 354-368 (NRVDSCPHQEETQHH) the composition is skewed to basic and acidic residues. Polar residues predominate over residues 399-415 (QSLTQTPGREPSTSQVQ). 3 positions are modified to phosphoserine: S422, S438, and S470. Position 478 is a phosphothreonine (T478).

As to expression, strong expression in fetal heart, brain, placenta, lung, liver, skeletal muscle, kidney and pancreas. Weak expression in adult pancreas, spleen, thymus, and ovary.

Its subcellular location is the nucleus. Its function is as follows. GTPase activator for the Rho-type GTPases by converting them to an inactive GDP-bound state. The polypeptide is Rho GTPase-activating protein 19 (ARHGAP19) (Homo sapiens (Human)).